Consider the following 495-residue polypeptide: MELGVLLLLTFTVGFLLLLASQNRPKTHGHLPPGPRPLPFLGNLLQMNRRGLLRSFMQLQEKYGDVFTVHLGPRPVVILCGTDTIREALVDQAEAFSGRGTVAVLHPVVQGYGVIFANGERWKILRRFSLVTMRNFGMGKRSVEERIKEEAQCLVEELKKYKGALLNPTSIFQSIAANIICSIVFGERFDYKDHQFLRLLDLIYQTFSLMGSLSSQVFELFSGFLKYFPGVHKQISKNLQEILNYIDHSVEKHRATLDPNTPRDFINTYLLRMEKEKSNHHTEFHHQNLVISVLSLFFTGTETTSTTLRYSFLIMLKYPHVAEKVQKEIDQVIGSHRLPTLDDRTKMPYTDAVIHEIQRFADLIPIGLPHRVTNDTMFLGYLLPKNTEVYPILSSALHDPRYFDHPDTFNPEHFLDVNGTLKKSEAFLPFSTGKRICLGEGIAQNELFIFFTAILQNFSLASPVAPEDIDLSPINSGISKIPSPYQIHFLSRCVG.

Phosphoserine; by PKA is present on S129. Residue C437 coordinates heme.

Belongs to the cytochrome P450 family. Requires heme as cofactor.

It is found in the endoplasmic reticulum membrane. Its subcellular location is the microsome membrane. The catalysed reaction is an organic molecule + reduced [NADPH--hemoprotein reductase] + O2 = an alcohol + oxidized [NADPH--hemoprotein reductase] + H2O + H(+). In terms of biological role, cytochromes P450 are a group of heme-thiolate monooxygenases. In liver microsomes, this enzyme is involved in an NADPH-dependent electron transport pathway. It oxidizes a variety of structurally unrelated compounds, including steroids, fatty acids, and xenobiotics. This is Cytochrome P450 2B15 (Cyp2b15) from Rattus norvegicus (Rat).